Reading from the N-terminus, the 490-residue chain is Probable cytosol aminopeptidase (490 aa).

Mn(2+) is bound by residues Lys-260 and Asp-265. Lys-272 is an active-site residue. Mn(2+) is bound by residues Asp-284, Asp-343, and Glu-345. Residue Arg-347 is part of the active site.

It belongs to the peptidase M17 family. Requires Mn(2+) as cofactor.

Its subcellular location is the cytoplasm. The catalysed reaction is Release of an N-terminal amino acid, Xaa-|-Yaa-, in which Xaa is preferably Leu, but may be other amino acids including Pro although not Arg or Lys, and Yaa may be Pro. Amino acid amides and methyl esters are also readily hydrolyzed, but rates on arylamides are exceedingly low.. The enzyme catalyses Release of an N-terminal amino acid, preferentially leucine, but not glutamic or aspartic acids.. In terms of biological role, presumably involved in the processing and regular turnover of intracellular proteins. Catalyzes the removal of unsubstituted N-terminal amino acids from various peptides. The polypeptide is Probable cytosol aminopeptidase (Gloeothece citriformis (strain PCC 7424) (Cyanothece sp. (strain PCC 7424))).